Consider the following 245-residue polypeptide: MKIVISPAKKMQTDGGFLPKSQPVFLDQAEELWSYLHSLDQAGLEKVWRANAKITEEARQMLAADLTQPQVPALFAYSGLQYQYLAADVLDQAGLDYLDQHLRVLSGLYGSLRPFDGIVPYRLEMKSPLPAFKYKSLYEFWGEKVYQELYQDDSVVLNLASKEYSHLLTPFLKEGDRLLEVVFQEEKNGKWRTQATHAKMARGRLVRWLAEGGRDLSDLPGFTDFGYAFAPDQSGEDRVVFRKKA.

It belongs to the UPF0246 family.

The protein is UPF0246 protein Ldb2075 of Lactobacillus delbrueckii subsp. bulgaricus (strain ATCC 11842 / DSM 20081 / BCRC 10696 / JCM 1002 / NBRC 13953 / NCIMB 11778 / NCTC 12712 / WDCM 00102 / Lb 14).